We begin with the raw amino-acid sequence, 236 residues long: Rab-like protein 3 (236 aa).

The interval 1–235 (MASLDRVKVL…GGGALKNFHC (235 aa)) is small GTPase-like. GTP is bound by residues 16 to 21 (GVGKSS), 148 to 150 (KLD), and 179 to 180 (DC).

The protein belongs to the small GTPase superfamily. Rab family. In terms of assembly, homodimer. Interacts with GPR89; the interaction stabilizes GPR89. Interacts with RAP1GDS1.

Required for KRAS signaling regulation and modulation of cell proliferation. Regulator of KRAS prenylation, and probably prenylation of other small GTPases. Required for lymphocyte development and function. Not required for myeloid cell development. This Mus musculus (Mouse) protein is Rab-like protein 3 (Rabl3).